Consider the following 246-residue polypeptide: Putative protein phosphatase 2C-type (246 aa).

In terms of domain architecture, PPM-type phosphatase spans 2-240; the sequence is KISLKTDIGQ…DNITIALVHN (239 aa). Mn(2+) is bound by residues Asp36, Gly37, Asp192, and Asp231.

Mg(2+) is required as a cofactor. The cofactor is Mn(2+).

The catalysed reaction is O-phospho-L-seryl-[protein] + H2O = L-seryl-[protein] + phosphate. It carries out the reaction O-phospho-L-threonyl-[protein] + H2O = L-threonyl-[protein] + phosphate. The protein is Putative protein phosphatase 2C-type of Streptococcus pyogenes serotype M6 (strain ATCC BAA-946 / MGAS10394).